The sequence spans 357 residues: Membrane-bound lytic murein transglycosylase C (357 aa).

A signal peptide spans 1-15; it reads MKKYLLLALLPFLYA. C16 is lipidated: N-palmitoyl cysteine. A lipid anchor (S-diacylglycerol cysteine) is attached at C16.

This sequence belongs to the transglycosylase Slt family.

The protein resides in the cell outer membrane. It catalyses the reaction Exolytic cleavage of the (1-&gt;4)-beta-glycosidic linkage between N-acetylmuramic acid (MurNAc) and N-acetylglucosamine (GlcNAc) residues in peptidoglycan, from either the reducing or the non-reducing ends of the peptidoglycan chains, with concomitant formation of a 1,6-anhydrobond in the MurNAc residue.. Murein-degrading enzyme. May play a role in recycling of muropeptides during cell elongation and/or cell division. The protein is Membrane-bound lytic murein transglycosylase C of Haemophilus influenzae (strain PittEE).